Consider the following 323-residue polypeptide: Ferrochelatase (323 aa).

Positions 196 and 277 each coordinate Fe cation.

This sequence belongs to the ferrochelatase family.

The protein localises to the cytoplasm. It catalyses the reaction heme b + 2 H(+) = protoporphyrin IX + Fe(2+). It participates in porphyrin-containing compound metabolism; protoheme biosynthesis; protoheme from protoporphyrin-IX: step 1/1. Catalyzes the ferrous insertion into protoporphyrin IX. This is Ferrochelatase from Haemophilus influenzae (strain ATCC 51907 / DSM 11121 / KW20 / Rd).